Consider the following 473-residue polypeptide: Ion-translocating oxidoreductase complex subunit C (473 aa).

2 4Fe-4S ferredoxin-type domains span residues 328 to 357 and 368 to 396; these read KNES…QQLY and TKKH…VKYF. Residues Cys-337, Cys-340, Cys-343, Cys-347, Cys-376, Cys-379, Cys-382, and Cys-386 each contribute to the [4Fe-4S] cluster site.

The protein belongs to the 4Fe4S bacterial-type ferredoxin family. RnfC subfamily. The complex is composed of six subunits: RnfA, RnfB, RnfC, RnfD, RnfE and RnfG. The cofactor is [4Fe-4S] cluster.

Its subcellular location is the cell inner membrane. In terms of biological role, part of a membrane-bound complex that couples electron transfer with translocation of ions across the membrane. The polypeptide is Ion-translocating oxidoreductase complex subunit C (Buchnera aphidicola subsp. Acyrthosiphon pisum (strain APS) (Acyrthosiphon pisum symbiotic bacterium)).